Here is a 415-residue protein sequence, read N- to C-terminus: Translation initiation factor 2 subunit gamma (415 aa).

The 200-residue stretch at 7 to 206 folds into the tr-type G domain; that stretch reads QPEVNIGVVG…GIEEYIKTPY (200 aa). Positions 16 to 23 are G1; it reads GHVDHGKT. Residues Asp19, Thr23, Gly44, and Thr46 each contribute to the Mg(2+) site. Residue 19–24 participates in GTP binding; sequence DHGKTT. The G2 stretch occupies residues 44–48; sequence GMTIK. Cys59, Cys62, Cys74, and Cys77 together coordinate Zn(2+). Positions 93–96 are G3; it reads DAPG. Residues 149-152 and 184-186 each bind GTP; these read NKVD and SAL. Residues 149 to 152 form a G4 region; the sequence is NKVD. Residues 184-186 form a G5 region; that stretch reads SAL.

It belongs to the TRAFAC class translation factor GTPase superfamily. Classic translation factor GTPase family. EIF2G subfamily. Heterotrimer composed of an alpha, a beta and a gamma chain. Mg(2+) serves as cofactor.

It carries out the reaction GTP + H2O = GDP + phosphate + H(+). Its function is as follows. eIF-2 functions in the early steps of protein synthesis by forming a ternary complex with GTP and initiator tRNA. In Saccharolobus solfataricus (strain ATCC 35092 / DSM 1617 / JCM 11322 / P2) (Sulfolobus solfataricus), this protein is Translation initiation factor 2 subunit gamma.